The primary structure comprises 1834 residues: Sodium channel protein type 4 subunit alpha (1834 aa).

Topologically, residues 1–131 are cytoplasmic; it reads MASSSLPNLV…RSAIKVLIHS (131 aa). The I repeat unit spans residues 113 to 448; that stretch reads MLSPFSIIRR…VVTMAYAEQN (336 aa). A helical transmembrane segment spans residues 132–150; sequence LFSMFIMITILPNCVVMTM. At 151 to 157 the chain is on the extracellular side; sequence SDPPPWP. A helical membrane pass occupies residues 158–178; the sequence is IHVENTFTGINTFESLIKMLA. Residues 179–192 lie on the Cytoplasmic side of the membrane; the sequence is RGFCIDDFTFLRDP. The helical transmembrane segment at 193-210 threads the bilayer; sequence WNWLDFSVIMMAYLTEFV. Residues 211-216 lie on the Extracellular side of the membrane; it reads DLGNIS. Residue Asn-214 is glycosylated (N-linked (GlcNAc...) asparagine). The helical transmembrane segment at 217-233 threads the bilayer; it reads ALRTFRVLRALKTITVI. The Cytoplasmic segment spans residues 234-252; it reads PGLKTIVGALIQSVKKLSD. A helical membrane pass occupies residues 253-272; that stretch reads VMILTVFCLSVFALVGLQLF. Topologically, residues 273–385 are extracellular; it reads MGNLRQKCVR…PNYGYTSHDT (113 aa). Cys-280 and Cys-354 form a disulfide bridge. N-linked (GlcNAc...) asparagine glycosylation is found at Asn-288, Asn-291, Asn-297, Asn-303, Asn-309, Asn-327, and Asn-356. Cys-363 and Cys-369 are joined by a disulfide. Positions 386 to 410 form an intramembrane region, pore-forming; the sequence is FSWAFLALFRLMIQDYWENLFQLTL. Residues 411-417 are Extracellular-facing; that stretch reads RAAGKTY. The helical transmembrane segment at 418–438 threads the bilayer; sequence MIFFVVIIFLGSFYLINLILA. The Cytoplasmic segment spans residues 439-572; sequence VVTMAYAEQN…NIIHLIVMDP (134 aa). Positions 486 to 525 are disordered; that stretch reads EGGEAGGDPAHSKDCNGSLDTSPGEKGPPRQSCSADSGVS. The stretch at 554 to 826 is one II repeat; it reads CCTPWVKFKN…QISSWPIKLG (273 aa). A helical transmembrane segment spans residues 573-591; that stretch reads FVDLGITICIVLNTLFMAM. The Extracellular segment spans residues 592-602; that stretch reads EHYPMTEHFDK. The helical transmembrane segment at 603-622 threads the bilayer; sequence VLTVGNLVFTGIFTAEMVLK. The Cytoplasmic portion of the chain corresponds to 623–636; it reads LIALDPYEYFQQGW. The helical transmembrane segment at 637-656 threads the bilayer; that stretch reads NVFDSIIVTLSWVELGLVNV. The Extracellular segment spans residues 657 to 658; the sequence is KG. A helical membrane pass occupies residues 659–676; sequence LSVLRSFRLVRSLKLAKS. Over 677–692 the chain is Cytoplasmic; it reads WPTLNMFIRIIGNSGG. A helical transmembrane segment spans residues 693 to 711; it reads GLGNLTLVLAIIVVNFSVV. The Extracellular segment spans residues 712 to 740; that stretch reads GMQLFGKNYKECVCKNASDCALPRWKMCD. Cys-725 and Cys-731 are joined by a disulfide. Positions 741–761 form an intramembrane region, pore-forming; it reads FFHSFLIVLRILCGEWIEPMW. Over 762-772 the chain is Extracellular; the sequence is GFMEVAGQAMF. The helical transmembrane segment at 773-791 threads the bilayer; the sequence is LTVLLMVMVNGNLVDLDLF. The Cytoplasmic portion of the chain corresponds to 792–1029; the sequence is LALLLNPLNS…ACFKIVEHHW (238 aa). Disordered stretches follow at residues 853–886 and 929–989; these read GDPGEAGEAGEAEESAPEDEKKEPPPEDDDKDLK and SDLE…QPEE. Positions 860-869 are enriched in acidic residues; sequence EAGEAEESAP. Residues 870-886 are compositionally biased toward basic and acidic residues; the sequence is EDEKKEPPPEDDDKDLK. 2 stretches are compositionally biased toward acidic residues: residues 929–945 and 972–989; these read SDLEMPTEEETDTFSEP and EDPEEQAEENPEGEQPEE. An III repeat occupies 1010 to 1323; that stretch reads RGKMWWTLRR…KKYYNAMKKL (314 aa). A helical transmembrane segment spans residues 1030 to 1047; the sequence is FKTFNSSLILLNSGTLAF. The Extracellular portion of the chain corresponds to 1048–1060; it reads EDIYIEQRRVIRT. The helical transmembrane segment at 1061–1079 threads the bilayer; the sequence is ILEYADKVFTYIFIMEMLL. Topologically, residues 1080 to 1093 are cytoplasmic; the sequence is KWVAYGFKVYFTNA. The chain crosses the membrane as a helical span at residues 1094–1112; it reads WCWLDFLIVDVSIISLVAN. Residues 1113-1120 are Extracellular-facing; that stretch reads WLGYSELG. Residues 1121–1139 form a helical membrane-spanning segment; it reads PIKSLRTLRALRPLRALSR. Residues 1140-1156 lie on the Cytoplasmic side of the membrane; it reads FEGMRVVVNALLGAIPS. Residues 1157 to 1176 traverse the membrane as a helical segment; sequence IMNVLLVCLIFWVIFSIMGV. At 1177-1227 the chain is on the extracellular side; it reads NLFAAKIYYFINTTTSERFDISGVNNKSECESLIHTGQVRWLNVKVNYDNV. N-linked (GlcNAc...) asparagine glycans are attached at residues Asn-1188 and Asn-1202. Positions 1228–1249 form an intramembrane region, pore-forming; sequence GLGYLSLLQVATFKGWMDIMYS. Residues 1250 to 1266 are Extracellular-facing; the sequence is AVDSREQEEQPQYEVNI. A helical membrane pass occupies residues 1267-1288; the sequence is YMYLYFVIFIIFGSFFTINSLI. Topologically, residues 1289–1351 are cytoplasmic; the sequence is RLIIVNFNQQ…MVYDFVTKQV (63 aa). The segment at 1307–1309 is important for rapid channel inactivation; sequence IFM. One copy of the IV repeat lies at 1332–1630; it reads IPRPQNKIQG…WEKFGPDATQ (299 aa). A helical membrane pass occupies residues 1352 to 1369; that stretch reads FDITIMILICLNMVTMMV. Residues 1370 to 1380 lie on the Extracellular side of the membrane; it reads ETDDQSQLKVD. A helical membrane pass occupies residues 1381 to 1399; it reads ILYNINMVFIIVFTGECVL. The Cytoplasmic portion of the chain corresponds to 1400–1411; sequence KMFALRQNYFTV. The helical transmembrane segment at 1412–1429 threads the bilayer; it reads GWNIFDFVVVILSIVGLA. Residues 1430-1442 lie on the Extracellular side of the membrane; that stretch reads LSDLIQKYFVSPT. The helical transmembrane segment at 1443 to 1459 threads the bilayer; the sequence is LFRVIRLARIGRVLRLI. At 1460 to 1478 the chain is on the cytoplasmic side; that stretch reads RGAKGIRTLLFALMMSLPA. A helical membrane pass occupies residues 1479 to 1496; sequence LFNIGLLLILVMFIYSIF. The Extracellular portion of the chain corresponds to 1497–1518; that stretch reads GMSNFAYVKKESGIDDMFNFET. The segment at residues 1519–1541 is an intramembrane region (pore-forming); sequence FGNSIICLFEITTSAGWDGLLNP. Topologically, residues 1542-1571 are extracellular; it reads ILNSGPPDCDPTLENPGTSVRGDCGNPSIG. A disulfide bridge connects residues Cys-1550 and Cys-1565. Residues 1572-1594 form a helical membrane-spanning segment; the sequence is ICFFCSYIIISFLIVVNMYIAII. Residues 1595–1834 lie on the Cytoplasmic side of the membrane; it reads LENFNVATEE…LHPGVKESLV (240 aa). Positions 1724–1753 constitute an IQ domain; that stretch reads EEVCAIKIQRAYRRHLLQRSVKQASYMYRH. A disordered region spans residues 1776 to 1834; the sequence is MYGRENGNSGVQNKGEERGSTGDAGPTMGLTPINPSDSALPPSPPPGLPLHPGVKESLV.

Belongs to the sodium channel (TC 1.A.1.10) family. Nav1.4/SCN4A subfamily. In terms of assembly, the Nav1.4 voltage-gated sodium channel consists of an ion-conducting alpha subunit SCN4A which is functional on its own and a regulatory beta subunit SCN1B. SCN1B strongly enhances the presence of SCN4A at the cell surface. SCN1B is also required for rapid channel inactivation and recovery after inactivation. It prevents the decrease of channel activity in response to repetitive, high-frequency depolarizations. Interacts with the syntrophins SNTA1, SNTB1 and SNTB2 (via PDZ domain); probably links SCN4A to the actin cytoskeleton and the extracellular matrix via the dystrophin-associated protein complex and regulates its localization in muscle cells. Interacts with TMEM233; probable regulator of the channel.

The protein resides in the cell membrane. It carries out the reaction Na(+)(in) = Na(+)(out). In terms of biological role, pore-forming subunit of Nav1.4, a voltage-gated sodium (Nav) channel that directly mediates the depolarizing phase of action potentials in excitable membranes. Navs, also called VGSCs (voltage-gated sodium channels) or VDSCs (voltage-dependent sodium channels), operate by switching between closed and open conformations depending on the voltage difference across the membrane. In the open conformation they allow Na(+) ions to selectively pass through the pore, along their electrochemical gradient. The influx of Na+ ions provokes membrane depolarization, initiating the propagation of electrical signals throughout cells and tissues. Highly expressed in skeletal muscles, Nav1.4 generates the action potential crucial for muscle contraction. The protein is Sodium channel protein type 4 subunit alpha of Equus caballus (Horse).